The sequence spans 727 residues: Synaptic vesicle glycoprotein 2C (727 aa).

The interval 1 to 57 (MEDSYKDRTSLMKGAKDIAKEVKKQTVKKVNQAVDRAQDEYTQRSYSRFQDEDDDDD) is interaction with SYT1. The Cytoplasmic segment spans residues 1-154 (MEDSYKDRTS…CGHGRFQWAL (154 aa)). The disordered stretch occupies residues 22–120 (VKKQTVKKVN…QPKGDEYKDR (99 aa)). A phosphoserine mark is found at serine 75 and serine 76. Threonine 79 is modified (phosphothreonine). Residues 155–175 (FFVLGMALMADGVEVFVVGFV) traverse the membrane as a helical segment. The Extracellular portion of the chain corresponds to 176 to 191 (LPSAETDLCIPNSGSG). Residues 192-212 (WLGSIVYLGMMVGAFFWGGLA) form a helical membrane-spanning segment. The Cytoplasmic segment spans residues 213-226 (DKVGRKQSLLICMS). Residues 227 to 247 (VNGFFAFLSSFVQGYGFFLLC) form a helical membrane-spanning segment. Residue arginine 248 is a topological domain, extracellular. Residues 249–269 (LLSGFGIGGAIPTVFSYFAEV) traverse the membrane as a helical segment. Over 270–280 (LAREKRGEHLS) the chain is Cytoplasmic. A helical transmembrane segment spans residues 281 to 301 (WLCMFWMIGGIYASAMAWAII). Topologically, residues 302-320 (PHYGWSFSMGSAYQFHSWR) are extracellular. The chain crosses the membrane as a helical span at residues 321 to 341 (VFVIVCALPCVSSVVALTFMP). The Cytoplasmic portion of the chain corresponds to 342-437 (ESPRFLLEVG…PVRENTIKLT (96 aa)). Residues 438-458 (IVWFTLSFGYYGLSVWFPDVI) traverse the membrane as a helical segment. Over 459–578 (KHLQSDEYAL…CQITFDDDYS (120 aa)) the chain is Extracellular. Tyrosine 466 is subject to Phosphotyrosine. 5 N-linked (GlcNAc...) asparagine glycosylation sites follow: asparagine 480, asparagine 484, asparagine 534, asparagine 559, and asparagine 565. The (Microbial infection) C.botulinum neurotoxin type A-binding stretch occupies residues 529 to 566 (NTYFKNCTFIDTLFENTDFEPYKFIDSEFQNCSFLHNK). The chain crosses the membrane as a helical span at residues 579–599 (AYWIYFVNFLGTLAVLPGNIV). Topologically, residues 600–609 (SALLMDRIGR) are cytoplasmic. Residues 610 to 630 (LTMLGGSMVLSGISCFFLWFG) traverse the membrane as a helical segment. Over 631–636 (TSESMM) the chain is Extracellular. Residues 637–657 (IGMLCLYNGLTISAWNSLDVV) form a helical membrane-spanning segment. The Cytoplasmic portion of the chain corresponds to 658 to 670 (TVELYPTDRRATG). Residues 671–693 (FGFLNALCKAAAVLGNLIFGSLV) form a helical membrane-spanning segment. Topologically, residues 694–697 (SITK) are extracellular. The chain crosses the membrane as a helical span at residues 698–716 (AIPILLASTVLVCGGLVGL). The Cytoplasmic portion of the chain corresponds to 717–727 (RLPDTRTQVLM).

The protein belongs to the major facilitator superfamily. As to quaternary structure, interacts with SYT1 in a calcium-dependent manner. (Microbial infection) Interacts with C.botulinum neurotoxin type A (BoNT/A, botA). In terms of assembly, (Microbial infection) Interacts with C.botulinum neurotoxin type F (BoNT/F). Interaction requires glycosylation of SV2 proteins. Post-translationally, N-glycosylated. Expressed at high levels in very few brain areas including the striatum, midbrain and hindbrain, and in the olfactory bulb. Expressed at lower levels in cerebrum, hippocampus and cerebellum (at protein level). Mainly expressed in brain; also detected in lung, liver, kidney.

Its subcellular location is the cytoplasmic vesicle. The protein resides in the secretory vesicle. It localises to the synaptic vesicle membrane. Its function is as follows. Plays a role in the control of regulated secretion in neural and endocrine cells, enhancing selectively low-frequency neurotransmission. Positively regulates vesicle fusion by maintaining the readily releasable pool of secretory vesicles. In terms of biological role, (Microbial infection) Receptor for C.botulinum neurotoxin type A (BoNT/A, botA); the toxin binds Sv2c via extracellular loop 4. Restores uptake of BoNT/A in rat cells that are deleted for SV2 receptor. Functionally, (Microbial infection) Possible receptor for C.botulinum neurotoxin type D (BoNT/D, botD); BoNT/D does not bind to extracellular loop 4 as do BoNT/A and BoNT/E. Another group does not find a convincing interaction with SV2. (Microbial infection) Receptor for C.botulinum neurotoxin type F (BoNT/F); binding requires glycosylation of Asn-573. This is Synaptic vesicle glycoprotein 2C (Sv2c) from Rattus norvegicus (Rat).